We begin with the raw amino-acid sequence, 134 residues long: Interleukin-4 (134 aa).

The first 23 residues, 1–23 (MGLTYQLLPALVCLLACTSFIQG), serve as a signal peptide directing secretion. 2 cysteine pairs are disulfide-bonded: Cys-24-Cys-133 and Cys-48-Cys-88. Asn-38 carries N-linked (GlcNAc...) asparagine glycosylation. Residue Asn-101 is glycosylated (N-linked (GlcNAc...) asparagine).

Belongs to the IL-4/IL-13 family.

Its subcellular location is the secreted. In terms of biological role, participates in at least several B-cell activation processes as well as of other cell types. It is a costimulator of DNA-synthesis. It induces the expression of class II MHC molecules on resting B-cells. It enhances both secretion and cell surface expression of IgE and IgG1. It also regulates the expression of the low affinity Fc receptor for IgE (CD23) on both lymphocytes and monocytes. Positively regulates IL31RA expression in macrophages. Stimulates autophagy in dendritic cells by interfering with mTORC1 signaling and through the induction of RUFY4. The chain is Interleukin-4 (IL4) from Equus caballus (Horse).